Consider the following 238-residue polypeptide: Orotidine 5'-phosphate decarboxylase (238 aa).

Residues aspartate 10, lysine 32, 59-68 (DLKLHDIPNT), threonine 122, arginine 184, glutamine 193, glycine 213, and arginine 214 contribute to the substrate site. The active-site Proton donor is lysine 61.

It belongs to the OMP decarboxylase family. Type 1 subfamily. As to quaternary structure, homodimer.

It catalyses the reaction orotidine 5'-phosphate + H(+) = UMP + CO2. It functions in the pathway pyrimidine metabolism; UMP biosynthesis via de novo pathway; UMP from orotate: step 2/2. In terms of biological role, catalyzes the decarboxylation of orotidine 5'-monophosphate (OMP) to uridine 5'-monophosphate (UMP). This is Orotidine 5'-phosphate decarboxylase from Bacillus cereus (strain AH187).